A 174-amino-acid polypeptide reads, in one-letter code: UPF0113 protein AF_0058 (174 aa).

Residues 87–161 enclose the PUA domain; it reads RNRVWVNERG…KVFVENLVDR (75 aa).

This sequence belongs to the UPF0113 family.

The chain is UPF0113 protein AF_0058 from Archaeoglobus fulgidus (strain ATCC 49558 / DSM 4304 / JCM 9628 / NBRC 100126 / VC-16).